Reading from the N-terminus, the 616-residue chain is Protein translocase subunit SecD (616 aa).

6 consecutive transmembrane segments (helical) span residues 11–31, 453–473, 475–495, 497–517, 547–569, and 585–605; these read LMVI…IYGE, QGIN…LFYY, MFGV…VGLM, ILPG…TLGM, YNGA…IILY, and LGVA…VNAL.

It belongs to the SecD/SecF family. SecD subfamily. In terms of assembly, forms a complex with SecF. Part of the essential Sec protein translocation apparatus which comprises SecA, SecYEG and auxiliary proteins SecDF-YajC and YidC.

The protein resides in the cell inner membrane. Part of the Sec protein translocase complex. Interacts with the SecYEG preprotein conducting channel. SecDF uses the proton motive force (PMF) to complete protein translocation after the ATP-dependent function of SecA. The protein is Protein translocase subunit SecD of Haemophilus influenzae (strain ATCC 51907 / DSM 11121 / KW20 / Rd).